The sequence spans 295 residues: Protein NEOXANTHIN-DEFICIENT 1 (295 aa).

Residues 221–251 (PAKVSGPSESDADKENSSEDQSSNVESVSRV) are disordered.

Its function is as follows. Required for neoxanthin biosynthesis. Probably not involved directly in the enzymatic conversion of violaxanthin to neoxanthin. Is necessary but not sufficient for neoxanthin synthesis. Seems not required for abscisic acid (ABA) biosynthesis in response to drought stress. This is Protein NEOXANTHIN-DEFICIENT 1 from Solanum lycopersicum (Tomato).